The chain runs to 700 residues: Elongation factor G (700 aa).

A tr-type G domain is found at 10-285 (DRTRNIGIMA…AVIDYLPSPL (276 aa)). GTP is bound by residues 19 to 26 (AHIDAGKT), 83 to 87 (DTPGH), and 137 to 140 (NKMD).

The protein belongs to the TRAFAC class translation factor GTPase superfamily. Classic translation factor GTPase family. EF-G/EF-2 subfamily.

Its subcellular location is the cytoplasm. Its function is as follows. Catalyzes the GTP-dependent ribosomal translocation step during translation elongation. During this step, the ribosome changes from the pre-translocational (PRE) to the post-translocational (POST) state as the newly formed A-site-bound peptidyl-tRNA and P-site-bound deacylated tRNA move to the P and E sites, respectively. Catalyzes the coordinated movement of the two tRNA molecules, the mRNA and conformational changes in the ribosome. This chain is Elongation factor G, found in Lacticaseibacillus paracasei (strain ATCC 334 / BCRC 17002 / CCUG 31169 / CIP 107868 / KCTC 3260 / NRRL B-441) (Lactobacillus paracasei).